A 177-amino-acid polypeptide reads, in one-letter code: Protein TERMINAL FLOWER 1 (177 aa).

The protein belongs to the phosphatidylethanolamine-binding protein family. In terms of tissue distribution, expressed below the apical dome of inflorescence and coflorescence meristems, and in inflorescence stem.

It localises to the cytoplasm. Functionally, controls inflorescence meristem identity and is required for maintenance of an indeterminate inflorescence. Prevents the expression of 'APETALA1' and 'LEAFY'. Also plays a role in the regulation of the time of flowering in the long-day flowering pathway. May form complexes with phosphorylated ligands by interfering with kinases and their effectors. This is Protein TERMINAL FLOWER 1 (TFL1) from Arabidopsis thaliana (Mouse-ear cress).